The sequence spans 145 residues: 3-hydroxyacyl-[acyl-carrier-protein] dehydratase FabZ (145 aa).

His-48 is a catalytic residue.

It belongs to the thioester dehydratase family. FabZ subfamily.

It is found in the cytoplasm. The catalysed reaction is a (3R)-hydroxyacyl-[ACP] = a (2E)-enoyl-[ACP] + H2O. Its function is as follows. Involved in unsaturated fatty acids biosynthesis. Catalyzes the dehydration of short chain beta-hydroxyacyl-ACPs and long chain saturated and unsaturated beta-hydroxyacyl-ACPs. The sequence is that of 3-hydroxyacyl-[acyl-carrier-protein] dehydratase FabZ from Saccharophagus degradans (strain 2-40 / ATCC 43961 / DSM 17024).